We begin with the raw amino-acid sequence, 217 residues long: Peptide methionine sulfoxide reductase MsrA 1 (217 aa).

The active site involves cysteine 57.

This sequence belongs to the MsrA Met sulfoxide reductase family.

The enzyme catalyses L-methionyl-[protein] + [thioredoxin]-disulfide + H2O = L-methionyl-(S)-S-oxide-[protein] + [thioredoxin]-dithiol. It catalyses the reaction [thioredoxin]-disulfide + L-methionine + H2O = L-methionine (S)-S-oxide + [thioredoxin]-dithiol. Its function is as follows. Has an important function as a repair enzyme for proteins that have been inactivated by oxidation. Catalyzes the reversible oxidation-reduction of methionine sulfoxide in proteins to methionine. This is Peptide methionine sulfoxide reductase MsrA 1 (msrA1) from Rhizobium meliloti (strain 1021) (Ensifer meliloti).